Here is a 47-residue protein sequence, read N- to C-terminus: Large ribosomal subunit protein bL34 (47 aa).

This sequence belongs to the bacterial ribosomal protein bL34 family.

In Rhodococcus opacus (strain B4), this protein is Large ribosomal subunit protein bL34.